The sequence spans 365 residues: Cyclin-O protein B (365 aa).

Residues 22–64 (SGKRKRDSVYSPGDATPGDRGEGEPKCPSVGTKKRAKYSRHRK) are disordered. Residues 53–64 (TKKRAKYSRHRK) show a composition bias toward basic residues.

It belongs to the cyclin family.

Its subcellular location is the cytoplasm. Specifically required for generation of multiciliated cells, possibly by promoting a cell cycle state compatible with centriole amplification and maturation. Acts downstream of mcidas to promote mother centriole amplification and maturation in preparation for apical docking. This chain is Cyclin-O protein B (ccno-b), found in Xenopus laevis (African clawed frog).